A 583-amino-acid polypeptide reads, in one-letter code: Aspartate--tRNA(Asp/Asn) ligase (583 aa).

L-aspartate is bound at residue glutamate 173. The segment at 197-200 is aspartate; the sequence is QMFK. Arginine 219 is an L-aspartate binding site. ATP is bound by residues 219 to 221 and glutamine 228; that span reads RDE. Histidine 447 provides a ligand contact to L-aspartate. Glutamate 481 serves as a coordination point for ATP. Arginine 488 is a binding site for L-aspartate. An ATP-binding site is contributed by 533–536; that stretch reads GLDR.

It belongs to the class-II aminoacyl-tRNA synthetase family. Type 1 subfamily. As to quaternary structure, homodimer.

It localises to the cytoplasm. The enzyme catalyses tRNA(Asx) + L-aspartate + ATP = L-aspartyl-tRNA(Asx) + AMP + diphosphate. Aspartyl-tRNA synthetase with relaxed tRNA specificity since it is able to aspartylate not only its cognate tRNA(Asp) but also tRNA(Asn). Reaction proceeds in two steps: L-aspartate is first activated by ATP to form Asp-AMP and then transferred to the acceptor end of tRNA(Asp/Asn). This Elusimicrobium minutum (strain Pei191) protein is Aspartate--tRNA(Asp/Asn) ligase.